Here is a 329-residue protein sequence, read N- to C-terminus: Aurora kinase B (329 aa).

The segment covering 1–14 (MTLSRAKHANRNHL) has biased composition (basic residues). Positions 1 to 21 (MTLSRAKHANRNHLPHLLAKV) are disordered. In terms of domain architecture, Protein kinase spans 53–305 (FEMGAHLGRG…LVDVMTHYWV (253 aa)). ATP-binding positions include 59-67 (LGRGKFGRV) and Lys82. The active-site Proton acceptor is Asp178.

The protein belongs to the protein kinase superfamily. Ser/Thr protein kinase family. Aurora subfamily. As to quaternary structure, interacts with Incenp and Cdc37. Requires Mg(2+) as cofactor.

It is found in the chromosome. The protein resides in the cytoplasm. The protein localises to the cytoskeleton. Its subcellular location is the midbody. The catalysed reaction is L-seryl-[protein] + ATP = O-phospho-L-seryl-[protein] + ADP + H(+). It catalyses the reaction L-threonyl-[protein] + ATP = O-phospho-L-threonyl-[protein] + ADP + H(+). Serine/threonine-protein kinase that mediates both meiotic and mitotic chromosome segregation. Required for histone H3 'Ser-10' phosphorylation. Phosphorylates mei-S332 within residues 124-126 and stabilizes its association with centromeres during meiosis. May regulate the function of the ESCRT-III complex core component shrb during abscission of germline cells in oogenesis. The sequence is that of Aurora kinase B from Drosophila melanogaster (Fruit fly).